A 242-amino-acid chain; its full sequence is ATP-dependent dethiobiotin synthetase BioD (242 aa).

12-17 is an ATP binding site; that stretch reads EVGKTV. Position 16 (Thr16) interacts with Mg(2+). Lys37 is an active-site residue. Substrate is bound at residue Ser41. Residues Asp51 and 112–115 contribute to the ATP site; that span reads EGAG. Asp51 and Glu112 together coordinate Mg(2+).

Belongs to the dethiobiotin synthetase family. In terms of assembly, homodimer. Mg(2+) is required as a cofactor.

Its subcellular location is the cytoplasm. The enzyme catalyses (7R,8S)-7,8-diammoniononanoate + CO2 + ATP = (4R,5S)-dethiobiotin + ADP + phosphate + 3 H(+). The protein operates within cofactor biosynthesis; biotin biosynthesis; biotin from 7,8-diaminononanoate: step 1/2. Functionally, catalyzes a mechanistically unusual reaction, the ATP-dependent insertion of CO2 between the N7 and N8 nitrogen atoms of 7,8-diaminopelargonic acid (DAPA, also called 7,8-diammoniononanoate) to form a ureido ring. This is ATP-dependent dethiobiotin synthetase BioD from Bacillus anthracis (strain A0248).